We begin with the raw amino-acid sequence, 146 residues long: Hemoglobin subunit delta (146 aa).

The region spanning 2–146 (HLTGEEKSAV…VATALAHKYH (145 aa)) is the Globin domain. A Phosphoserine modification is found at Ser50. Heme b is bound by residues His63 and His92.

It belongs to the globin family. As to quaternary structure, heterotetramer of two delta chains and two alpha chains. As to expression, red blood cells.

The sequence is that of Hemoglobin subunit delta (HBD) from Leontocebus nigricollis (Black-mantled tamarin).